The primary structure comprises 152 residues: D-aminoacyl-tRNA deacylase (152 aa).

The Gly-cisPro motif, important for rejection of L-amino acids signature appears at 142–143; sequence GP.

Belongs to the DTD family. Homodimer.

It localises to the cytoplasm. It catalyses the reaction glycyl-tRNA(Ala) + H2O = tRNA(Ala) + glycine + H(+). It carries out the reaction a D-aminoacyl-tRNA + H2O = a tRNA + a D-alpha-amino acid + H(+). An aminoacyl-tRNA editing enzyme that deacylates mischarged D-aminoacyl-tRNAs. Also deacylates mischarged glycyl-tRNA(Ala), protecting cells against glycine mischarging by AlaRS. Acts via tRNA-based rather than protein-based catalysis; rejects L-amino acids rather than detecting D-amino acids in the active site. By recycling D-aminoacyl-tRNA to D-amino acids and free tRNA molecules, this enzyme counteracts the toxicity associated with the formation of D-aminoacyl-tRNA entities in vivo and helps enforce protein L-homochirality. The protein is D-aminoacyl-tRNA deacylase of Burkholderia lata (strain ATCC 17760 / DSM 23089 / LMG 22485 / NCIMB 9086 / R18194 / 383).